Reading from the N-terminus, the 113-residue chain is Large ribosomal subunit protein eL31 (113 aa).

The protein belongs to the eukaryotic ribosomal protein eL31 family. As to quaternary structure, component of the large ribosomal subunit (LSU). Mature yeast ribosomes consist of a small (40S) and a large (60S) subunit. The 40S small subunit contains 1 molecule of ribosomal RNA (18S rRNA) and at least 33 different proteins. The large 60S subunit contains 3 rRNA molecules (25S, 5.8S and 5S rRNA) and at least 46 different proteins.

It localises to the cytoplasm. Functionally, component of the ribosome, a large ribonucleoprotein complex responsible for the synthesis of proteins in the cell. The small ribosomal subunit (SSU) binds messenger RNAs (mRNAs) and translates the encoded message by selecting cognate aminoacyl-transfer RNA (tRNA) molecules. The large subunit (LSU) contains the ribosomal catalytic site termed the peptidyl transferase center (PTC), which catalyzes the formation of peptide bonds, thereby polymerizing the amino acids delivered by tRNAs into a polypeptide chain. The nascent polypeptides leave the ribosome through a tunnel in the LSU and interact with protein factors that function in enzymatic processing, targeting, and the membrane insertion of nascent chains at the exit of the ribosomal tunnel. The sequence is that of Large ribosomal subunit protein eL31 (rpl31) from Schizosaccharomyces pombe (strain 972 / ATCC 24843) (Fission yeast).